Consider the following 367-residue polypeptide: Chorismate synthase (367 aa).

Residues Phe-41 to Arg-60 are disordered. Residues Arg-48 and Arg-54 each contribute to the NADP(+) site. FMN-binding positions include Arg-125–Ser-127, Asn-238–Ala-239, Gly-278, Lys-293–Ser-297, and Arg-319.

This sequence belongs to the chorismate synthase family. Homotetramer. The cofactor is FMNH2.

The catalysed reaction is 5-O-(1-carboxyvinyl)-3-phosphoshikimate = chorismate + phosphate. It functions in the pathway metabolic intermediate biosynthesis; chorismate biosynthesis; chorismate from D-erythrose 4-phosphate and phosphoenolpyruvate: step 7/7. Its function is as follows. Catalyzes the anti-1,4-elimination of the C-3 phosphate and the C-6 proR hydrogen from 5-enolpyruvylshikimate-3-phosphate (EPSP) to yield chorismate, which is the branch point compound that serves as the starting substrate for the three terminal pathways of aromatic amino acid biosynthesis. This reaction introduces a second double bond into the aromatic ring system. The chain is Chorismate synthase from Xanthomonas axonopodis pv. citri (strain 306).